Here is a 107-residue protein sequence, read N- to C-terminus: Integration host factor subunit alpha (107 aa).

It belongs to the bacterial histone-like protein family. As to quaternary structure, heterodimer of an alpha and a beta chain.

This protein is one of the two subunits of integration host factor, a specific DNA-binding protein that functions in genetic recombination as well as in transcriptional and translational control. The polypeptide is Integration host factor subunit alpha (Mesorhizobium japonicum (strain LMG 29417 / CECT 9101 / MAFF 303099) (Mesorhizobium loti (strain MAFF 303099))).